A 375-amino-acid polypeptide reads, in one-letter code: EP300-interacting inhibitor of differentiation 3 (375 aa).

Positions 23–51 form a coiled coil; that stretch reads AWQHLVKQEEEEAVKKEEKEEGEDEEEEG. Positions 30–68 are disordered; the sequence is QEEEEAVKKEEKEEGEDEEEEGSDSSSDDPNPEPPCMHP. Residues 42–60 are compositionally biased toward acidic residues; that stretch reads EEGEDEEEEGSDSSSDDPN.

The protein belongs to the NSE4 family. As to quaternary structure, component of the SMC5-SMC6 complex which consists at least of SMC5, SMC6, NSMCE2, NSMCE1, NSMCE4A or EID3 and NSMCE3; EID3 seems to be a testis-specific subunit. NSMCE1, NSMCE4A or EID3 and NSMCE3 probably form a subcomplex that bridges the head domains of the SMC5:SMC6 heterodimer. Homodimer, and heterodimer with EID2. Interacts with the C-terminal region of CREBBP.

The protein localises to the nucleus. Its subcellular location is the cytoplasm. It localises to the chromosome. It is found in the telomere. Tissue-specific component of the SMC5-SMC6 complex, a complex involved in repair of DNA double-strand breaks by homologous recombination. The complex may promote sister chromatid homologous recombination by recruiting the SMC1-SMC3 cohesin complex to double-strand breaks. The complex is required for telomere maintenance via recombination and mediates sumoylation of shelterin complex (telosome) components. Functionally, acts as a repressor of nuclear receptor-dependent transcription possibly by interfering with CREBBP-dependent coactivation. May function as a coinhibitor of other CREBBP/EP300-dependent transcription factors. This is EP300-interacting inhibitor of differentiation 3 from Mus musculus (Mouse).